The chain runs to 503 residues: Zinc finger protein JACKDAW (503 aa).

A compositionally biased stretch (low complexity) spans Ile32 to Ser51. The disordered stretch occupies residues Ile32–Val68. Ser72 is modified (phosphoserine). 2 C2H2-type zinc fingers span residues Phe82–His104 and Tyr124–His154. Short sequence motifs (nuclear localization signal) lie at residues His100–Pro107 and Ile146–Lys153. A C2H2-type 2; degenerate zinc finger spans residues Trp159–Gly182. Positions 161, 164, 177, 181, 188, 190, 203, and 207 each coordinate Zn(2+). A CCHC-type 2; atypical zinc finger spans residues Tyr186–Ala209. Residues Arg196–Asp208 form an SHR-binding region. Disordered regions lie at residues Ser301 to Met417 and Arg432 to Ala465. The span at Thr319–Ser358 shows a compositional bias: low complexity. Residues Met381–Pro392 show a composition bias toward polar residues. Positions Ala396–Ala407 are enriched in low complexity. Polar residues predominate over residues Gly444 to Ala465.

As to quaternary structure, interacts with SHR, SCR, MGP and itself. The heterodimer with SHR involves its zinc fingers. Interacts with SIEL. Binds to RGA and SCL3 competitively in the nucleus. As to expression, expressed in the quiescent center, the ground tissue stem cells and to a lesser extent in mature cortex and endodermis cells.

It is found in the nucleus. Transcription factor that, together with BIB, regulates tissue boundaries and asymmetric cell division by a rapid up-regulation of 'SCARECROW' (SCR), thus controlling the nuclear localization of 'SHORT-ROOT' (SHR) and restricting its action. Binds DNA via its zinc fingers. Recognizes and binds to SCL3 promoter sequence 5'-AGACAA-3' to promote its expression when in complex with RGA. Confines CYCD6 expression to the cortex-endodermis initial/daughter (CEI/CEID) tissues. Required for radial patterning and stem cell maintenance. Counteracted by 'MAGPIE' (MGP). Binds to the SCR and MGP promoter sequences. Controls position-dependent signals that regulate epidermal-cell-type patterning. The sequence is that of Zinc finger protein JACKDAW from Arabidopsis thaliana (Mouse-ear cress).